The chain runs to 578 residues: Palmitoyltransferase ZDHHC1 (578 aa).

The Cytoplasmic segment spans residues 1–41; that stretch reads MDVCSKNSNRTAPVSEGGIRRADVPLCSRTNGWSWPPHPFQ. The chain crosses the membrane as a helical span at residues 42-62; the sequence is FLAWLLYLYFAVTGFGVFVPL. Over 63-71 the chain is Lumenal; it reads LPTHWIPAG. A helical transmembrane segment spans residues 72 to 92; sequence YICTGITFVCHLFMHLMAVSI. Topologically, residues 93-174 are cytoplasmic; that stretch reads DPADYNVRAK…YWLFLNSVIS (82 aa). The 53-residue stretch at 121–173 folds into the DHHC domain; sequence ENCHCYLCEVDVGPKSKHCSACNKCVASFDHHCRWLNNCVGSRNYWLFLNSVI. C153 acts as the S-palmitoyl cysteine intermediate in catalysis. Residues 175-195 traverse the membrane as a helical segment; it reads ALLGIVLVVVIASYVFIEFFL. The Lumenal segment spans residues 196-230; the sequence is DPSKLRSDKHFQQVRNESVVWFVFLPVAPVTTAGP. Residues 231-251 traverse the membrane as a helical segment; it reads AIPALAGVTIALGLLSALLLG. Residues 252–578 are Cytoplasmic-facing; the sequence is HLLCFHIYLM…PSSRVGTSLA (327 aa). Positions 278 to 288 are enriched in basic and acidic residues; it reads QEAGDSRKPPP. Disordered regions lie at residues 278–298, 345–376, 497–517, and 532–578; these read QEAGDSRKPPPENDSGVPKLN, HMDEEEHLPSVLTEQKASPHPHKHAQKKKRKV, SAAGHAAPSPQPRTKRKTAAR, and SMFM…TSLA. Residues 363 to 376 are compositionally biased toward basic residues; it reads PHPHKHAQKKKRKV. Residues 552 to 561 show a composition bias toward basic residues; sequence AAKRKQTGKK.

Belongs to the DHHC palmitoyltransferase family.

The protein resides in the endosome membrane. It is found in the endoplasmic reticulum membrane. It localises to the golgi apparatus. It carries out the reaction L-cysteinyl-[protein] + hexadecanoyl-CoA = S-hexadecanoyl-L-cysteinyl-[protein] + CoA. In terms of biological role, palmitoyltransferase that catalyzes the addition of palmitate onto various protein substrates, such as ncdn and nlrp3. The protein is Palmitoyltransferase ZDHHC1 of Danio rerio (Zebrafish).